The chain runs to 558 residues: CTP synthase (558 aa).

An amidoligase domain region spans residues 1-267; it reads MAKFVFVTGG…CLEMLDVLNL (267 aa). S13 is a binding site for CTP. S13 provides a ligand contact to UTP. Residues 14-19 and D71 each bind ATP; that span reads SIGKGI. 2 residues coordinate Mg(2+): D71 and E141. CTP contacts are provided by residues 148 to 150, 188 to 193, and K224; these read DIE and KTKPTQ. UTP-binding positions include 188 to 193 and K224; that span reads KTKPTQ. The 243-residue stretch at 292 to 534 folds into the Glutamine amidotransferase type-1 domain; sequence KVALVGKYVQ…IEAAQLRLPA (243 aa). G354 is a binding site for L-glutamine. The active-site Nucleophile; for glutamine hydrolysis is C381. L-glutamine is bound by residues 382-385, E405, and R462; that span reads LGMQ. Catalysis depends on residues H507 and E509. A disordered region spans residues 536-558; it reads PDEALRRQSQTNISAQEKPSRIG. Polar residues predominate over residues 542 to 552; sequence RQSQTNISAQE.

It belongs to the CTP synthase family. Homotetramer.

It catalyses the reaction UTP + L-glutamine + ATP + H2O = CTP + L-glutamate + ADP + phosphate + 2 H(+). It carries out the reaction L-glutamine + H2O = L-glutamate + NH4(+). The enzyme catalyses UTP + NH4(+) + ATP = CTP + ADP + phosphate + 2 H(+). Its pathway is pyrimidine metabolism; CTP biosynthesis via de novo pathway; CTP from UDP: step 2/2. Allosterically activated by GTP, when glutamine is the substrate; GTP has no effect on the reaction when ammonia is the substrate. The allosteric effector GTP functions by stabilizing the protein conformation that binds the tetrahedral intermediate(s) formed during glutamine hydrolysis. Inhibited by the product CTP, via allosteric rather than competitive inhibition. Catalyzes the ATP-dependent amination of UTP to CTP with either L-glutamine or ammonia as the source of nitrogen. Regulates intracellular CTP levels through interactions with the four ribonucleotide triphosphates. This is CTP synthase from Prochlorococcus marinus (strain MIT 9303).